The following is an 89-amino-acid chain: Probable oxaloacetate decarboxylase gamma chain (89 aa).

The helical transmembrane segment at 13 to 33 (LMLSGMGFVITFLLILIWAIT) threads the bilayer.

This sequence belongs to the OadG family. As to quaternary structure, heterotrimer of an alpha, a beta and a gamma subunit. Requires Na(+) as cofactor.

The protein localises to the cell membrane. It catalyses the reaction oxaloacetate + 2 Na(+)(in) + H(+) = pyruvate + 2 Na(+)(out) + CO2. In terms of biological role, catalyzes the decarboxylation of oxaloacetate coupled to Na(+) translocation. This Actinobacillus succinogenes (strain ATCC 55618 / DSM 22257 / CCUG 43843 / 130Z) protein is Probable oxaloacetate decarboxylase gamma chain.